The chain runs to 128 residues: Ribonuclease pancreatic (128 aa).

Residues 1 to 13 show a composition bias toward basic and acidic residues; that stretch reads KESPAMKFERQHM. The disordered stretch occupies residues 1–26; it reads KESPAMKFERQHMDSGSTSSSNPTYC. Lys7 and Arg10 together coordinate substrate. Residue His12 is the Proton acceptor of the active site. Over residues 14 to 26 the composition is skewed to polar residues; that stretch reads DSGSTSSSNPTYC. Cystine bridges form between Cys26/Cys84, Cys40/Cys95, Cys58/Cys110, and Cys65/Cys72. Residue Asn34 is glycosylated (N-linked (GlcNAc...) asparagine). Residue 41 to 45 participates in substrate binding; that stretch reads KPVNT. N-linked (GlcNAc...) asparagine glycosylation is present at Asn62. Residues Lys66 and Arg85 each coordinate substrate. His119 functions as the Proton donor in the catalytic mechanism.

This sequence belongs to the pancreatic ribonuclease family. In terms of assembly, monomer. Interacts with and forms tight 1:1 complexes with RNH1. Dimerization of two such complexes may occur. Interaction with RNH1 inhibits this protein. In terms of tissue distribution, pancreas.

The protein localises to the secreted. The catalysed reaction is an [RNA] containing cytidine + H2O = an [RNA]-3'-cytidine-3'-phosphate + a 5'-hydroxy-ribonucleotide-3'-[RNA].. It catalyses the reaction an [RNA] containing uridine + H2O = an [RNA]-3'-uridine-3'-phosphate + a 5'-hydroxy-ribonucleotide-3'-[RNA].. Functionally, endonuclease that catalyzes the cleavage of RNA on the 3' side of pyrimidine nucleotides. Acts on single-stranded and double-stranded RNA. The polypeptide is Ribonuclease pancreatic (RNASE1) (Equus caballus (Horse)).